Here is a 326-residue protein sequence, read N- to C-terminus: tRNA-modifying protein YgfZ (326 aa).

Folate contacts are provided by Trp27 and Trp189.

The protein belongs to the tRNA-modifying YgfZ family.

It localises to the cytoplasm. Functionally, folate-binding protein involved in regulating the level of ATP-DnaA and in the modification of some tRNAs. It is probably a key factor in regulatory networks that act via tRNA modification, such as initiation of chromosomal replication. This Shigella sonnei (strain Ss046) protein is tRNA-modifying protein YgfZ.